Reading from the N-terminus, the 451-residue chain is MSDFFHSDVLSVSELNAFAKSLLENHLAGLWIAGEVSNLTRAASGHYYFSLKDSRAQVRCAMFKGAAARLAKPLKEGDHIEVSGKISIYEARGEFQITVNEVRLKGLGQLYEAYERLKAQLQAEGAFAAERKKPLPTRPQCIGIVTSLAAAALRDVVTTLKRRAPEIPVIVYPTPVQGAGSELQIAQAIKTASQRAECDVLIVCRGGGSIEDLWAFNEEPVVRAIEACTVPVVSGVGHETDFTLADFVADVRAPTPTGAAELVSPNRQESLHRLAQAQGRLKTVLEQRYFDASQKLDWLARQIRHPRQKLDEQRASIGKLAQTLSYSMKQNLRAHTARFERQTQALQHYRPDVSVCKNNIVRLQTALPAAFSQLLTHRRQSLTAQAALLEAVSPQHILERGFSVVKNTRGQVIRNADVLKQGQKLHITFADGETDVRVSKEQGQQDLFDCI.

It belongs to the XseA family. In terms of assembly, heterooligomer composed of large and small subunits.

It localises to the cytoplasm. It catalyses the reaction Exonucleolytic cleavage in either 5'- to 3'- or 3'- to 5'-direction to yield nucleoside 5'-phosphates.. Its function is as follows. Bidirectionally degrades single-stranded DNA into large acid-insoluble oligonucleotides, which are then degraded further into small acid-soluble oligonucleotides. The protein is Exodeoxyribonuclease 7 large subunit of Neisseria meningitidis serogroup A / serotype 4A (strain DSM 15465 / Z2491).